Consider the following 529-residue polypeptide: Bifunctional purine biosynthesis protein PurH (529 aa).

The MGS-like domain maps to 1–148; it reads MQQRRPVRRA…KNHKDVAIVV (148 aa).

Belongs to the PurH family.

It carries out the reaction (6R)-10-formyltetrahydrofolate + 5-amino-1-(5-phospho-beta-D-ribosyl)imidazole-4-carboxamide = 5-formamido-1-(5-phospho-D-ribosyl)imidazole-4-carboxamide + (6S)-5,6,7,8-tetrahydrofolate. It catalyses the reaction IMP + H2O = 5-formamido-1-(5-phospho-D-ribosyl)imidazole-4-carboxamide. It functions in the pathway purine metabolism; IMP biosynthesis via de novo pathway; 5-formamido-1-(5-phospho-D-ribosyl)imidazole-4-carboxamide from 5-amino-1-(5-phospho-D-ribosyl)imidazole-4-carboxamide (10-formyl THF route): step 1/1. The protein operates within purine metabolism; IMP biosynthesis via de novo pathway; IMP from 5-formamido-1-(5-phospho-D-ribosyl)imidazole-4-carboxamide: step 1/1. This Salmonella paratyphi A (strain ATCC 9150 / SARB42) protein is Bifunctional purine biosynthesis protein PurH.